A 92-amino-acid chain; its full sequence is MMSTKGITLFLCLLLLALATSVNGGQGTRRSRMTRALHGGRPSARYDAPYCSEEELQACDCSHNPVRDACLCQYDPAGSPACECFCVEPWRR.

Residues 1–24 (MMSTKGITLFLCLLLLALATSVNG) form the signal peptide. A propeptide spanning residues 25–44 (GQGTRRSRMTRALHGGRPSA) is cleaved from the precursor.

Post-translationally, contains 4 disulfide bonds. Expressed by the venom duct.

The protein localises to the secreted. In terms of biological role, probable neurotoxin with unknown target. Possibly targets ion channels. The chain is Conotoxin Cal22f from Californiconus californicus (California cone).